The primary structure comprises 446 residues: UDP-N-acetylmuramate--L-alanine ligase (446 aa).

122-128 (GTHGKTT) is a binding site for ATP.

It belongs to the MurCDEF family.

The protein localises to the cytoplasm. It carries out the reaction UDP-N-acetyl-alpha-D-muramate + L-alanine + ATP = UDP-N-acetyl-alpha-D-muramoyl-L-alanine + ADP + phosphate + H(+). It participates in cell wall biogenesis; peptidoglycan biosynthesis. In terms of biological role, cell wall formation. This is UDP-N-acetylmuramate--L-alanine ligase from Nocardioides sp. (strain ATCC BAA-499 / JS614).